Here is a 798-residue protein sequence, read N- to C-terminus: Integrin beta-1 (798 aa).

The N-terminal stretch at 1 to 20 is a signal peptide; it reads MNLQLIFWIGLISSICCVFG. The Extracellular segment spans residues 21-728; sequence QADENRCLKA…ETPECPTGPD (708 aa). Positions 26–76 constitute a PSI domain; the sequence is RCLKANAKSCGECIQAGPNCGWCVNSTFLQEGMPTSARCDDLEALKKKGCH. Intrachain disulfides connect cysteine 27–cysteine 45, cysteine 35–cysteine 464, cysteine 38–cysteine 64, cysteine 48–cysteine 75, cysteine 207–cysteine 213, cysteine 261–cysteine 301, cysteine 401–cysteine 415, cysteine 435–cysteine 462, cysteine 466–cysteine 486, cysteine 477–cysteine 489, cysteine 491–cysteine 500, cysteine 502–cysteine 533, cysteine 516–cysteine 531, cysteine 525–cysteine 536, cysteine 538–cysteine 553, cysteine 555–cysteine 576, cysteine 560–cysteine 574, cysteine 568–cysteine 579, cysteine 581–cysteine 590, cysteine 592–cysteine 615, cysteine 599–cysteine 613, cysteine 607–cysteine 618, cysteine 620–cysteine 630, cysteine 633–cysteine 636, cysteine 640–cysteine 691, cysteine 646–cysteine 665, cysteine 649–cysteine 661, and cysteine 699–cysteine 723. Asparagine 50 carries an N-linked (GlcNAc...) asparagine glycan. Positions 75–91 are enriched in basic and acidic residues; it reads CHPDDIENPRGSKDVKK. The tract at residues 75 to 107 is disordered; it reads CHPDDIENPRGSKDVKKNKNVTNRSKGTAEKLQ. N-linked (GlcNAc...) asparagine glycans are attached at residues asparagine 94 and asparagine 97. Positions 140-378 constitute a VWFA domain; sequence DYPIDLYYLM…QLIIDAYNSL (239 aa). The Mg(2+) site is built by serine 152 and serine 154. The Ca(2+) site is built by serine 154, aspartate 157, aspartate 158, and glutamate 189. Residues 207 to 213 are CX3CL1-binding; it reads CTSEQNC. Residue asparagine 212 is glycosylated (N-linked (GlcNAc...) asparagine). The Ca(2+) site is built by asparagine 244, aspartate 246, proline 248, and glutamate 249. Glutamate 249 is a Mg(2+) binding site. An N-linked (GlcNAc...) asparagine glycan is attached at asparagine 269. A CX3CL1-binding region spans residues 295 to 314; it reads LPNDGQCHLENDVYTMSHYY. A Ca(2+)-binding site is contributed by alanine 362. N-linked (GlcNAc...) asparagine glycans are attached at residues asparagine 363, asparagine 406, and asparagine 417. An interaction with TMEM182 region spans residues 383 to 465; sequence ILENSKLPEG…IILQFICECE (83 aa). I-EGF domains are found at residues 466-501, 502-554, 555-591, and 592-631; these read CQNEGIPSSPKCHEGNGSFECGACRCNEGRVGRHCE, CSTD…KFCE, CDNFNCDRSNGLICGGNGVCKCRVCECNPNYTGSACD, and CSLDTTSCMATNGQICNGRGICECGACKCTDPKFQGPTCE. An N-linked (GlcNAc...) asparagine glycan is attached at asparagine 481. N-linked (GlcNAc...) asparagine glycosylation occurs at asparagine 520. A glycan (N-linked (GlcNAc...) asparagine) is linked at asparagine 584. Residue asparagine 669 is glycosylated (N-linked (GlcNAc...) asparagine). A helical transmembrane segment spans residues 729-751; sequence IIPIVAGVVAGIVLIGLALLLIW. The Cytoplasmic portion of the chain corresponds to 752–798; sequence KLLMIIHDTREFAKFEKEKMNAKWDTGENPIYKSAVTTVVNPKYEGK. The interval 762–767 is signal for sorting from recycling endosomes; interaction with ACAP1; sequence EFAKFE. A Phosphothreonine modification is found at threonine 777. A Phosphotyrosine modification is found at tyrosine 783. Serine 785 bears the Phosphoserine mark. Positions 785 to 792 are interaction with ITGB1BP1; it reads SAVTTVVN. Threonine 789 bears the Phosphothreonine mark. Lysine 794 is modified (N6-acetyllysine; alternate). Residue lysine 794 forms a Glycyl lysine isopeptide (Lys-Gly) (interchain with G-Cter in SUMO1); alternate linkage.

This sequence belongs to the integrin beta chain family. Interacts with seprase FAP (seprase); the interaction occurs at the cell surface of invadopodia membrane in a collagen-dependent manner. Heterodimer of an alpha and a beta subunit. Beta-1 associates with either alpha-1, alpha-2, alpha-3, alpha-4, alpha-5, alpha-6, alpha-7, alpha-8, alpha-9, alpha-10, alpha-11 or alpha-V. ITGA6:ITGB1 is found in a complex with CD9; interaction takes place in oocytes and is involved in sperm-egg fusion. Binds LGALS3BP and NMRK2, when associated with alpha-7, but not with alpha-5. Interacts with FLNA, FLNB, FLNC and RANBP9. Interacts with KRT1 in the presence of RACK1 and SRC. Interacts with JAML; integrin alpha-4/beta-1 may regulate leukocyte to endothelial cells adhesion by controlling JAML homodimerization. Interacts with RAB21. Interacts (via the cytoplasmic region) with RAB25 (via the hypervariable C-terminal region). Interacts with MYO10. Interacts with ITGB1BP1 (via C-terminal region); the interaction is a prerequisite for focal adhesion disassembly. Interacts with TLN1; the interaction is prevented by competitive binding of ITGB1BP1. Interacts with ACAP1; required for ITGB1 recycling. Interacts with ASAP3. Interacts with FERMT2; the interaction is inhibited in presence of ITGB1BP1. Interacts with DAB2. Interacts with FGR and HCK. Interacts with alpha-7A and alpha-7B in adult skeletal muscle. Interacts with alpha-7B in cardiomyocytes of adult heart. Interacts with EMP2; the interaction may be direct or indirect and ITGB1 has a heterodimer form. ITGA5:ITGB1 interacts with CCN3. ITGA4:ITGB1 is found in a ternary complex with CX3CR1 and CX3CL1. ITGA5:ITGB1 interacts with FBN1. ITGA5:ITGB1 acts as a receptor for fibronectin FN1 and mediates R-G-D-dependent cell adhesion to FN1. ITGA5:ITGB1 interacts with IL1B. Interacts with MDK. ITGA4:ITGB1 interacts with MDK; this interaction mediates MDK-induced osteoblast cells migration through PXN phosphorylation. ITGA6:ITGB1 interacts with MDK; this interaction mediates MDK-induced neurite-outgrowth. ITGA5:ITGB1 interacts with ACE2. Interacts with TMEM182 and LAMB1. Interacts with tensin TNS3; TNS3 also interacts with PEAK1, thus acting as an adapter molecule to bridge the association of PEAK1 with ITGB1. Interacts with tensin TNS4; the interaction displaces tensin TNS3 from the ITGB1 cytoplasmic tail and promotes ITGB1 stability. Integrin ITGA9:ITGB1 interacts with SPP1/OPN (via N-terminus). Integrin ITGA9:ITGB1 interacts with TNC/TNFN3 (via the 3rd Fibronectin type-III domain). Integrins ITGA4:ITGB1 and ITGA9:ITGB1 interact with SVEP1 (via Sushi domain 21); thereby inhibit Ca(2+) intracellular signaling and as a result repress vasocontraction. ITGA4:ITGB1 and ITGA5:ITGB1 interacts with SELP. Interacts with CD248. ITGA5:ITGB1 interacts with IGFBP1. ITGA4:ITGB1 interacts with BCAM. Interacts with ADGRG6.

The protein localises to the cell membrane. Its subcellular location is the cell projection. The protein resides in the invadopodium membrane. It localises to the ruffle membrane. It is found in the recycling endosome. The protein localises to the melanosome. Its subcellular location is the lamellipodium. The protein resides in the ruffle. It localises to the cell junction. It is found in the focal adhesion. Integrins alpha-1/beta-1, alpha-2/beta-1, alpha-10/beta-1 and alpha-11/beta-1 are receptors for collagen. Integrins alpha-1/beta-1 and alpha-2/beta-2 recognize the proline-hydroxylated sequence G-F-P-G-E-R in collagen. Integrins alpha-2/beta-1, alpha-3/beta-1, alpha-4/beta-1, alpha-5/beta-1, alpha-8/beta-1, alpha-10/beta-1, alpha-11/beta-1 and alpha-V/beta-1 are receptors for fibronectin. Alpha-4/beta-1 recognizes one or more domains within the alternatively spliced CS-1 and CS-5 regions of fibronectin. Integrin alpha-5/beta-1 is a receptor for fibrinogen. Integrin alpha-1/beta-1, alpha-2/beta-1, alpha-6/beta-1 and alpha-7/beta-1 are receptors for lamimin. Integrin alpha-6/beta-1 (ITGA6:ITGB1) is present in oocytes and is involved in sperm-egg fusion. Integrin alpha-4/beta-1 is a receptor for VCAM1 and recognizes the sequence Q-I-D-S in VCAM1. Integrin alpha-9/beta-1 is a receptor for VCAM1, cytotactin and osteopontin. It recognizes the sequence A-E-I-D-G-I-E-L in cytotactin. Integrin alpha-3/beta-1 is a receptor for epiligrin, thrombospondin and CSPG4. Integrin alpha-3/beta-1 provides a docking site for FAP (seprase) at invadopodia plasma membranes in a collagen-dependent manner and hence may participate in the adhesion, formation of invadopodia and matrix degradation processes, promoting cell invasion. Alpha-3/beta-1 may mediate with LGALS3 the stimulation by CSPG4 of endothelial cells migration. Integrin alpha-V/beta-1 is a receptor for vitronectin. Beta-1 integrins recognize the sequence R-G-D in a wide array of ligands. When associated with alpha-7/beta-1 integrin, regulates cell adhesion and laminin matrix deposition. Involved in promoting endothelial cell motility and angiogenesis. Involved in osteoblast compaction through the fibronectin fibrillogenesis cell-mediated matrix assembly process and the formation of mineralized bone nodules. May be involved in up-regulation of the activity of kinases such as PKC via binding to KRT1. Together with KRT1 and RACK1, serves as a platform for SRC activation or inactivation. Plays a mechanistic adhesive role during telophase, required for the successful completion of cytokinesis. ITGA4:ITGB1 binds to fractalkine (CX3CL1) and may act as its coreceptor in CX3CR1-dependent fractalkine signaling. ITGA4:ITGB1 and ITGA5:ITGB1 bind to PLA2G2A via a site (site 2) which is distinct from the classical ligand-binding site (site 1) and this induces integrin conformational changes and enhanced ligand binding to site 1. ITGA5:ITGB1 acts as a receptor for fibrillin-1 (FBN1) and mediates R-G-D-dependent cell adhesion to FBN1. ITGA5:ITGB1 is a receptor for IL1B and binding is essential for IL1B signaling. ITGA5:ITGB3 is a receptor for soluble CD40LG and is required for CD40/CD40LG signaling. Plays an important role in myoblast differentiation and fusion during skeletal myogenesis. ITGA9:ITGB1 may play a crucial role in SVEP1/polydom-mediated myoblast cell adhesion. Integrins ITGA9:ITGB1 and ITGA4:ITGB1 repress PRKCA-mediated L-type voltage-gated channel Ca(2+) influx and ROCK-mediated calcium sensitivity in vascular smooth muscle cells via their interaction with SVEP1, thereby inhibit vasocontraction. The chain is Integrin beta-1 (ITGB1) from Felis catus (Cat).